Here is a 216-residue protein sequence, read N- to C-terminus: MKFFVDTADTQDIADLAATGLIDGVTTNPSLIAKSGRPFAEVIAEICALTDGPVSAEVVAIDFDGMMREGRKLAKIADNVTVKLPLTLEGLKACKALTSDGIDVNVTLCFSANQALLAAKAGATFISPFIGRLDDIHIDGMELIQEIRQIYDNYMFETEILAASIRSPNHVRLCALAGADVMTAPPAVIRSLVSHPLTDKGLETFLADAKKAGIEV.

The Schiff-base intermediate with substrate role is filled by Lys-83.

This sequence belongs to the transaldolase family. Type 3B subfamily.

The protein resides in the cytoplasm. The enzyme catalyses D-sedoheptulose 7-phosphate + D-glyceraldehyde 3-phosphate = D-erythrose 4-phosphate + beta-D-fructose 6-phosphate. Its pathway is carbohydrate degradation; pentose phosphate pathway; D-glyceraldehyde 3-phosphate and beta-D-fructose 6-phosphate from D-ribose 5-phosphate and D-xylulose 5-phosphate (non-oxidative stage): step 2/3. Transaldolase is important for the balance of metabolites in the pentose-phosphate pathway. This is Probable transaldolase from Hyphomonas neptunium (strain ATCC 15444).